The primary structure comprises 84 residues: Putative membrane protein insertion efficiency factor (84 aa).

Belongs to the UPF0161 family.

Its subcellular location is the cell inner membrane. In terms of biological role, could be involved in insertion of integral membrane proteins into the membrane. This chain is Putative membrane protein insertion efficiency factor, found in Nostoc sp. (strain PCC 7120 / SAG 25.82 / UTEX 2576).